A 570-amino-acid polypeptide reads, in one-letter code: Double-stranded RNA-binding protein Staufen homolog 2 (570 aa).

The 68-residue stretch at 8-75 folds into the DRBM 1 domain; it reads TPVCLVNELA…ANKALTESTL (68 aa). Disordered regions lie at residues 71–94 and 178–203; these read TEST…PGSI and ALQN…DDKD. The span at 83–94 shows a compositional bias: polar residues; it reads PKSNVNNNPGSI. Positions 95–181 constitute a DRBM 2 domain; that stretch reads TPTVELNGLA…AMKALQALQN (87 aa). Ser188 bears the Phosphoserine mark. Basic and acidic residues predominate over residues 194–203; sequence SGKEMDDDKD. 2 consecutive DRBM domains span residues 207–274 and 307–375; these read SEIS…ELKK and NPIS…QLGY. Short sequence motifs (nuclear localization signal) lie at residues 273 to 291 and 373 to 412; these read KKLP…FKKR and LGYK…PKGI. Residues 381-413 are disordered; sequence LQDPLDKTGENKGWSGPKPGFPEPTNNTPKGIL. The segment at 381–570 is required for dendritic transport; it reads LQDPLDKTGE…QDCKKSKSAI (190 aa). A Phosphoserine modification is found at Ser395. Phosphothreonine is present on Thr405. A phosphoserine mark is found at Ser416, Ser426, Ser440, Ser455, and Ser492. The segment at 545–570 is disordered; sequence LREKADNNQAKPASISQDCKKSKSAI. Polar residues predominate over residues 551–561; sequence NNQAKPASISQ.

In terms of assembly, interacts with microtubules. Isoform 2 and isoform 3 may also interact with ribosomes, and this association is independent of translation. Identified in a mRNP complex, at least composed of DHX9, DDX3X, ELAVL1, HNRNPU, IGF2BP1, ILF3, PABPC1, PCBP2, PTBP2, STAU1, STAU2, SYNCRIP and YBX1. Interacts with the exportin XPO5. This requires RNA and RAN bound to GTP. Interacts with TRIM71 (via NHL repeats) in an RNA-dependent manner. As to expression, expressed in brain and neurons, where isoform 2 and isoform 3 appear to be the most abundant. Expressed at the neuromuscular junction of the extensor digitorum longus, tibialis anterior and soleus muscles. Expression at neuromuscular junctions is most pronounced in slow-twitch muscle. Also weakly expressed in heart, kidney, ovary and testis.

It localises to the cytoplasm. The protein localises to the nucleus. It is found in the nucleolus. Its subcellular location is the endoplasmic reticulum. Functionally, RNA-binding protein required for the microtubule-dependent transport of neuronal RNA from the cell body to the dendrite. As protein synthesis occurs within the dendrite, the localization of specific mRNAs to dendrites may be a prerequisite for neurite outgrowth and plasticity at sites distant from the cell body. This is Double-stranded RNA-binding protein Staufen homolog 2 (Stau2) from Mus musculus (Mouse).